Here is a 452-residue protein sequence, read N- to C-terminus: NADH-quinone oxidoreductase subunit N 2 (452 aa).

14 consecutive transmembrane segments (helical) span residues 6-26, 33-53, 70-90, 97-117, 120-140, 154-174, 194-214, 232-252, 258-278, 286-306, 311-331, 355-375, 387-407, and 432-452; these read VLIPEISLLILAIISFFYGFI, TYILSFLSILTAIILSVFNFG, TLRILVLFIGVFIIGLSYSDL, SVEYVFLLLLSLFGMNLMIVA, LLILYLALETFSLSLYILAGF, YFILGTLSSIILLGSIVFFYA, ILLGVVFLISAFAFKLSLAPF, FLSTAPKVAVFGALINIFLSI, IQDLIVIISALSMLVGNVLAL, MLAYSSIAHAGYMFMAFLLPE, ISLIPYLIVYVFMNLSAFAFI, FCIIVIMFSLTGVPPTAGFIV, GYGSLVFFALLMSIFSAFYYL, and ALSGALLLIFLGLFPNLLLIF.

The protein belongs to the complex I subunit 2 family. NDH-1 is composed of 14 different subunits. Subunits NuoA, H, J, K, L, M, N constitute the membrane sector of the complex.

It is found in the cell inner membrane. It carries out the reaction a quinone + NADH + 5 H(+)(in) = a quinol + NAD(+) + 4 H(+)(out). Functionally, NDH-1 shuttles electrons from NADH, via FMN and iron-sulfur (Fe-S) centers, to quinones in the respiratory chain. The immediate electron acceptor for the enzyme in this species is believed to be ubiquinone. Couples the redox reaction to proton translocation (for every two electrons transferred, four hydrogen ions are translocated across the cytoplasmic membrane), and thus conserves the redox energy in a proton gradient. The protein is NADH-quinone oxidoreductase subunit N 2 of Thermodesulfovibrio yellowstonii (strain ATCC 51303 / DSM 11347 / YP87).